The sequence spans 45 residues: Mu-conotoxin-like Cal 12.1.2g (45 aa).

4 disulfide bridges follow: Cys-3-Cys-16, Cys-11-Cys-28, Cys-18-Cys-33, and Cys-27-Cys-39. The residue at position 23 (Pro-23) is a 4-hydroxyproline. A 6'-bromotryptophan mark is found at Trp-37 and Trp-38. Pro-40 is subject to 4-hydroxyproline.

In terms of tissue distribution, expressed by the venom duct.

The protein resides in the secreted. Functionally, mu-conotoxins block voltage-gated sodium channels. This toxin reversibly blocks voltage-gated sodium channel in cephalopods, with no alteration in the voltage dependence of sodium conductance or on the kinetics of inactivation. This chain is Mu-conotoxin-like Cal 12.1.2g, found in Californiconus californicus (California cone).